A 228-amino-acid polypeptide reads, in one-letter code: Probable septum site-determining protein MinC (228 aa).

This sequence belongs to the MinC family. Interacts with MinD and FtsZ.

Cell division inhibitor that blocks the formation of polar Z ring septums. Rapidly oscillates between the poles of the cell to destabilize FtsZ filaments that have formed before they mature into polar Z rings. Prevents FtsZ polymerization. The protein is Probable septum site-determining protein MinC of Oceanobacillus iheyensis (strain DSM 14371 / CIP 107618 / JCM 11309 / KCTC 3954 / HTE831).